Here is a 500-residue protein sequence, read N- to C-terminus: Beta-glucosidase 30 (500 aa).

The signal sequence occupies residues 1–25 (MGIRMGRRLLFTLFLGALFCNGVYA). Gln-46 contacts a beta-D-glucoside. Asn-63 and Asn-114 each carry an N-linked (GlcNAc...) asparagine glycan. A beta-D-glucoside contacts are provided by residues His-149 and 194–195 (NE). Catalysis depends on Glu-195, which acts as the Proton donor. Cys-214 and Cys-222 are oxidised to a cystine. Tyr-338 is an a beta-D-glucoside binding site. Asn-363 carries N-linked (GlcNAc...) asparagine glycosylation. Position 409 (Glu-409) interacts with a beta-D-glucoside. Catalysis depends on Glu-409, which acts as the Nucleophile. N-linked (GlcNAc...) asparagine glycosylation is found at Asn-416 and Asn-417. A beta-D-glucoside-binding positions include Trp-456, 463–464 (EW), and Phe-472.

Belongs to the glycosyl hydrolase 1 family.

It carries out the reaction Hydrolysis of terminal, non-reducing beta-D-glucosyl residues with release of beta-D-glucose.. This is Beta-glucosidase 30 (BGLU30) from Oryza sativa subsp. japonica (Rice).